The primary structure comprises 278 residues: Digeranylgeranylglyceryl phosphate synthase (278 aa).

The next 8 membrane-spanning stretches (helical) occupy residues 12–32 (LKNC…ASYF), 34–54 (LATV…CGFG), 91–111 (LLVF…LMAV), 129–149 (IIGN…GGIA), 153–173 (IDVT…REII), 204–224 (FLLV…FFGI), 225–245 (YYML…YNLV), and 257–277 (SRNI…GSLF).

This sequence belongs to the UbiA prenyltransferase family. DGGGP synthase subfamily. The cofactor is Mg(2+).

Its subcellular location is the cell membrane. It catalyses the reaction sn-3-O-(geranylgeranyl)glycerol 1-phosphate + (2E,6E,10E)-geranylgeranyl diphosphate = 2,3-bis-O-(geranylgeranyl)-sn-glycerol 1-phosphate + diphosphate. Its pathway is membrane lipid metabolism; glycerophospholipid metabolism. In terms of biological role, prenyltransferase that catalyzes the transfer of the geranylgeranyl moiety of geranylgeranyl diphosphate (GGPP) to the C2 hydroxyl of (S)-3-O-geranylgeranylglyceryl phosphate (GGGP). This reaction is the second ether-bond-formation step in the biosynthesis of archaeal membrane lipids. This is Digeranylgeranylglyceryl phosphate synthase from Methanococcus maripaludis (strain C7 / ATCC BAA-1331).